We begin with the raw amino-acid sequence, 179 residues long: Serglycin (179 aa).

The N-terminal stretch at 1–26 (MRQVPVGTRLVLALAFVLVWGSSVQG) is a signal peptide. The propeptide at 27–75 (YPARRARYQWVRCKPDGIFANCIEEKGPRFDLIAEESNVGPPMTDPVLM) is activation peptide. The cysteines at positions 39 and 48 are disulfide-linked. The tract at residues 86–145 (SDDYSGSGSGSGSGSGSGSGSGSGSGSGSGSGSGSGSGSGSGSGSGSGSGSGSLADMEWE) is disordered. O-linked (Xyl...) (glycosaminoglycan) serine glycosylation is found at Ser-90 and Ser-92. Tandem repeats lie at residues 90–91 (SG), 92–93 (SG), 94–95 (SG), 96–97 (SG), 98–99 (SG), 100–101 (SG), 102–103 (SG), 104–105 (SG), 106–107 (SG), 108–109 (SG), 110–111 (SG), 112–113 (SG), 114–115 (SG), 116–117 (SG), 118–119 (SG), 120–121 (SG), 122–123 (SG), 124–125 (SG), 126–127 (SG), 128–129 (SG), 130–131 (SG), 132–133 (SG), 134–135 (SG), and 136–137 (SG). Residues 90–137 (SGSGSGSGSGSGSGSGSGSGSGSGSGSGSGSGSGSGSGSGSGSGSGSG) are 24 X 2 AA tandem repeats of S-G. The segment covering 92–136 (SGSGSGSGSGSGSGSGSGSGSGSGSGSGSGSGSGSGSGSGSGSGS) has biased composition (gly residues). Ser-96, Ser-98, Ser-100, Ser-102, Ser-104, and Ser-106 each carry an O-linked (Xyl...) (glycosaminoglycan) serine glycan.

This sequence belongs to the serglycin family. In terms of assembly, binds to activated CD44 and to GZMB. O-glycosylated; contains chondroitin sulfate and heparan sulfate.

The protein localises to the cytoplasmic granule. It localises to the cytolytic granule. The protein resides in the secreted. It is found in the extracellular space. Its subcellular location is the golgi apparatus. In terms of biological role, plays a role in formation of mast cell secretory granules and mediates storage of various compounds in secretory vesicles. Required for storage of some proteases in both connective tissue and mucosal mast cells and for storage of granzyme B in T-lymphocytes. Plays a role in localizing neutrophil elastase in azurophil granules of neutrophils. Mediates processing of MMP2. Plays a role in cytotoxic cell granule-mediated apoptosis by forming a complex with granzyme B which is delivered to cells by perforin to induce apoptosis. Regulates the secretion of TNF-alpha and may also regulate protease secretion. Inhibits bone mineralization. The chain is Serglycin (Srgn) from Rattus norvegicus (Rat).